The chain runs to 207 residues: LexA repressor (207 aa).

A DNA-binding region (H-T-H motif) is located at residues 28–48 (RAEIARELGFRSANAAEEHLK). Catalysis depends on for autocatalytic cleavage activity residues Ser-124 and Lys-161.

This sequence belongs to the peptidase S24 family. Homodimer.

The catalysed reaction is Hydrolysis of Ala-|-Gly bond in repressor LexA.. Represses a number of genes involved in the response to DNA damage (SOS response), including recA and lexA. In the presence of single-stranded DNA, RecA interacts with LexA causing an autocatalytic cleavage which disrupts the DNA-binding part of LexA, leading to derepression of the SOS regulon and eventually DNA repair. This Aliivibrio salmonicida (strain LFI1238) (Vibrio salmonicida (strain LFI1238)) protein is LexA repressor.